The following is a 428-amino-acid chain: Glutamate-1-semialdehyde 2,1-aminomutase (428 aa).

Lysine 265 is subject to N6-(pyridoxal phosphate)lysine.

It belongs to the class-III pyridoxal-phosphate-dependent aminotransferase family. HemL subfamily. In terms of assembly, homodimer. It depends on pyridoxal 5'-phosphate as a cofactor.

The protein localises to the cytoplasm. It catalyses the reaction (S)-4-amino-5-oxopentanoate = 5-aminolevulinate. The protein operates within porphyrin-containing compound metabolism; protoporphyrin-IX biosynthesis; 5-aminolevulinate from L-glutamyl-tRNA(Glu): step 2/2. This chain is Glutamate-1-semialdehyde 2,1-aminomutase, found in Shewanella frigidimarina (strain NCIMB 400).